Reading from the N-terminus, the 234-residue chain is Large ribosomal subunit protein uL1 (234 aa).

This sequence belongs to the universal ribosomal protein uL1 family. In terms of assembly, part of the 50S ribosomal subunit.

Its function is as follows. Binds directly to 23S rRNA. The L1 stalk is quite mobile in the ribosome, and is involved in E site tRNA release. In terms of biological role, protein L1 is also a translational repressor protein, it controls the translation of the L11 operon by binding to its mRNA. This chain is Large ribosomal subunit protein uL1, found in Prochlorococcus marinus (strain SARG / CCMP1375 / SS120).